Consider the following 244-residue polypeptide: MLPSLIQPCSSGTLLMLLMSNLFLWEKVSSAPINASEAVLSDLKDLFDNATVLSGEMSKLGVIMRKEFFMNSFSSETFNKIILDLHKSTENITKAFNSCHTVPINVPETVEDVRKTSFEEFLKMVLHMLLAWKEPLKHLVTELSALPECPYRILSKAEAIEAKNKDLLEYIIRIISKVNPAIKENEDYPTWSDLDSLKSADKETQFFALYMFSFCLRIDLETVDFLVNFLKCLLLYDDVCYSEF.

A signal peptide spans 1 to 30 (MLPSLIQPCSSGTLLMLLMSNLFLWEKVSS). Disulfide bonds link Cys-99-Cys-215 and Cys-232-Cys-240.

Belongs to the somatotropin/prolactin family.

Its subcellular location is the secreted. The protein is Prolactin-7D1 (Prl7d1) of Mus musculus (Mouse).